The following is a 390-amino-acid chain: Scoulerine-9-O-methyltransferase 1 (390 aa).

Glu-153 contributes to the substrate binding site. S-adenosyl-L-methionine contacts are provided by residues Met-207, Ser-211, Gly-235, Asp-258, 278 to 279 (DM), and Lys-292. The active-site Proton acceptor is His-296. 296 to 297 (HD) contributes to the substrate binding site.

The protein belongs to the class I-like SAM-binding methyltransferase superfamily. Cation-independent O-methyltransferase family. COMT subfamily. In terms of assembly, homodimer. Highly expressed in capsules. Expressed is stems. Expressed at low levels in roots.

It carries out the reaction (S)-scoulerine + S-adenosyl-L-methionine = (S)-tetrahydrocolumbamine + S-adenosyl-L-homocysteine + H(+). It catalyses the reaction (S)-tetrahydrocolumbamine + S-adenosyl-L-methionine = (S)-tetrahydropalmatine + S-adenosyl-L-homocysteine + H(+). The catalysed reaction is (S)-norreticuline + S-adenosyl-L-methionine = (S)-norcodamine + S-adenosyl-L-homocysteine + H(+). The enzyme catalyses (S)-reticuline + S-adenosyl-L-methionine = (S)-codamine + S-adenosyl-L-homocysteine + H(+). The protein operates within alkaloid biosynthesis. Functionally, methyltransferase involved in the biosynthesis of the benzylisoquinoline alkaloid noscapine. Catalyzes the conversion of (S)-scoulerine to (S)-tetrahydrocolumbamine. Can convert (S)-tetrahydrocolumbamine to tetrahydropalmatine. Can convert (S)-norreticuline to (S)-norcodamine. Can convert (S)-reticuline to (S)-codamine. Substrate preference is (S)-scoulerine &gt; (S)-tetrahydrocolumbamine &gt; (S)-norreticuline &gt; (S)-reticuline. This is Scoulerine-9-O-methyltransferase 1 from Papaver somniferum (Opium poppy).